Here is a 20-residue protein sequence, read N- to C-terminus: Antifungal protein (20 aa).

It belongs to the protease inhibitor I3 (leguminous Kunitz-type inhibitor) family.

Inhibits soybean trypsin. Has antifungal activity against R.cerealis, A.brassicae and A.niger, and weak antifungal activity against F.oxysporum. The chain is Antifungal protein from Cullen corylifolium (Malaysian scurfpea).